Here is a 159-residue protein sequence, read N- to C-terminus: MSNRAVAVLRGDPGVTGTVWFSQDKESDPCVIKGEIKGLTPGLHGFHVHQYGDSTNGCTSAGPHFNPFNKTHGGPKDDVRHVGDLGNVEAGADGVAHFEIKDHLVKIHGEHTVVGRSLVVHAGTDDLGKGVGEKKEESLKTGNRGARVACGVIATAAPQ.

Positions 47, 49, and 64 each coordinate Cu cation. Residues cysteine 58 and cysteine 150 are joined by a disulfide bond. Zn(2+)-binding residues include histidine 64, histidine 72, histidine 81, and aspartate 84. Residue histidine 121 coordinates Cu cation.

Belongs to the Cu-Zn superoxide dismutase family. It depends on Cu cation as a cofactor. The cofactor is Zn(2+).

It is found in the cytoplasm. It catalyses the reaction 2 superoxide + 2 H(+) = H2O2 + O2. Its function is as follows. Destroys radicals which are normally produced within the cells and which are toxic to biological systems. In Haemonchus contortus (Barber pole worm), this protein is Superoxide dismutase [Cu-Zn] (SOD).